A 923-amino-acid chain; its full sequence is Transportin-3 (923 aa).

M1 carries the post-translational modification N-acetylmethionine. S74 is subject to Phosphoserine. T896 carries the post-translational modification Phosphothreonine.

Interacts with (GTP-bound) Ran. Interacts with (phosphorylated) SFRS1 and SFRS2; leading to their nuclear import. Interacts with NUP62. Interacts with RBM4. Interacts with CPSF6, promoting its nuclear import. In terms of assembly, (Microbial infection) Interacts with the HIV-1 pre-integration complex (PIC), which is composed of viral genome, matrix protein, Vpr and integrase. Interacts with HIV-1 integrase protein; the interaction is direct. As to expression, expressed in skeletal muscle.

Its subcellular location is the nucleus envelope. It localises to the cytoplasm. In terms of biological role, importin, which transports target proteins into the nucleus. Specifically mediates the nuclear import of splicing factor serine/arginine (SR) proteins, such as RBM4, SFRS1 and SFRS2, by recognizing phosphorylated SR domains. Also mediates the nuclear import of serine/arginine (SR) protein CPSF6, independently of CPSF6 phosphorylation. The nuclear import process is regulated by the small GTPase Ran that partitions between cytoplasm and nucleus in the predominantly GDP- and GTP-bound form, respectively. Importin associates with target cargo proteins in the cytoplasm, and the competitive binding of GTP-bound Ran induces the release of cargos in the nucleus. Functionally, (Microbial infection) Involved in immunodeficiency virus (HIV-1) infection by importing the pre-integration complex (PIC) into the nucleus. Required for a nuclear maturation step of HIV-1 prior to integration. This Homo sapiens (Human) protein is Transportin-3.